The sequence spans 349 residues: Protein Wnt-7b (349 aa).

Residues 1–24 (MHRNFRKWIFYVFLCFGVIYVKLG) form the signal peptide. Intrachain disulfides connect Cys-73/Cys-84, Cys-123/Cys-131, Cys-133/Cys-152, Cys-200/Cys-214, and Cys-202/Cys-209. N-linked (GlcNAc...) asparagine glycosylation is found at Asn-83 and Asn-127. The O-palmitoleoyl serine; by PORCN moiety is linked to residue Ser-206. The interval 238–266 (VEVVRASRLRQPTFLKIKQIKSYQKPMET) is disordered linker. 6 disulfide bridges follow: Cys-278–Cys-309, Cys-294–Cys-304, Cys-308–Cys-348, Cys-324–Cys-339, Cys-326–Cys-336, and Cys-331–Cys-332. Residue Asn-295 is glycosylated (N-linked (GlcNAc...) asparagine).

It belongs to the Wnt family. In terms of processing, palmitoleoylation is required for efficient binding to frizzled receptors. Depalmitoleoylation leads to Wnt signaling pathway inhibition. As to expression, expressed in differentiating lens fiber cells.

Its subcellular location is the secreted. The protein resides in the extracellular space. The protein localises to the extracellular matrix. Functionally, ligand for members of the frizzled family of seven transmembrane receptors that functions in the canonical Wnt/beta-catenin signaling pathway. Required for normal fusion of the chorion and the allantois during placenta development. Required for central nervous system (CNS) angiogenesis and blood-brain barrier regulation. The sequence is that of Protein Wnt-7b (WNT7B) from Gallus gallus (Chicken).